The sequence spans 225 residues: pH-response regulator palI/RIM9 homolog 2 (225 aa).

Residues 1 to 4 (MLVK) are Cytoplasmic-facing. Residues 5–25 (IVLVVLLTLALVFECFSTISV) form a helical membrane-spanning segment. Residues 26-87 (PITIGLYISE…PNHAKYALSN (62 aa)) are Extracellular-facing. Residues 88–108 (LLLVHVLAFVCVTILWVFGML) traverse the membrane as a helical segment. The Cytoplasmic portion of the chain corresponds to 109-120 (TCFRCIKTSRRM). A helical membrane pass occupies residues 121-141 (LIIAVLWSMLTFMVTLLGFLI). At 142–153 (DILIFSSHVTWC) the chain is on the extracellular side. The chain crosses the membrane as a helical span at residues 154–174 (TWLTLASAFFTVLSGTVLCVM). Residues 175–225 (RRNLTYDKFLESKPEKHGVYVPLCRLNDVEELEIPWCNTMNHQALTAPTPM) are Cytoplasmic-facing.

This sequence belongs to the palI/RIM9 family.

The protein resides in the cell membrane. Required for the proteolytic cleavage of the transcription factor RIM101 in response to alkaline ambient pH. In Kluyveromyces lactis (strain ATCC 8585 / CBS 2359 / DSM 70799 / NBRC 1267 / NRRL Y-1140 / WM37) (Yeast), this protein is pH-response regulator palI/RIM9 homolog 2.